A 208-amino-acid polypeptide reads, in one-letter code: Protein GrpE (208 aa).

A disordered region spans residues 1-62; that stretch reads MTEKDESVKS…ETAVDPKDEE (62 aa). The span at 46 to 55 shows a compositional bias: acidic residues; sequence SNEESSEETA.

The protein belongs to the GrpE family. Homodimer.

Its subcellular location is the cytoplasm. Functionally, participates actively in the response to hyperosmotic and heat shock by preventing the aggregation of stress-denatured proteins, in association with DnaK and GrpE. It is the nucleotide exchange factor for DnaK and may function as a thermosensor. Unfolded proteins bind initially to DnaJ; upon interaction with the DnaJ-bound protein, DnaK hydrolyzes its bound ATP, resulting in the formation of a stable complex. GrpE releases ADP from DnaK; ATP binding to DnaK triggers the release of the substrate protein, thus completing the reaction cycle. Several rounds of ATP-dependent interactions between DnaJ, DnaK and GrpE are required for fully efficient folding. The sequence is that of Protein GrpE from Staphylococcus haemolyticus (strain JCSC1435).